Consider the following 432-residue polypeptide: Amino-acid acetyltransferase (432 aa).

In terms of domain architecture, N-acetyltransferase spans 286–425 (EQLREAGIED…ASLYNFQRNS (140 aa)).

Belongs to the acetyltransferase family. ArgA subfamily.

The protein resides in the cytoplasm. The enzyme catalyses L-glutamate + acetyl-CoA = N-acetyl-L-glutamate + CoA + H(+). Its pathway is amino-acid biosynthesis; L-arginine biosynthesis; N(2)-acetyl-L-ornithine from L-glutamate: step 1/4. This chain is Amino-acid acetyltransferase, found in Pseudomonas aeruginosa (strain LESB58).